The chain runs to 179 residues: Protein LDB18 (179 aa).

Its function is as follows. May be involved in protein-linked oligosaccharide phosphorylation since the deletion reduces the negative charge of the cell surface. The protein is Protein LDB18 (LDB18) of Saccharomyces cerevisiae (strain ATCC 204508 / S288c) (Baker's yeast).